Reading from the N-terminus, the 581-residue chain is Arginine--tRNA ligase (581 aa).

Residues Pro126–His136 carry the 'HIGH' region motif.

Belongs to the class-I aminoacyl-tRNA synthetase family. As to quaternary structure, monomer.

It is found in the cytoplasm. It catalyses the reaction tRNA(Arg) + L-arginine + ATP = L-arginyl-tRNA(Arg) + AMP + diphosphate. The polypeptide is Arginine--tRNA ligase (Shewanella putrefaciens (strain CN-32 / ATCC BAA-453)).